The following is a 75-amino-acid chain: uncharacterized protein (75 aa).

The segment covering 19–38 (FHNTAPSKTNVNVPRANKSQ) has biased composition (polar residues). The interval 19-42 (FHNTAPSKTNVNVPRANKSQSKGK) is disordered. Residues 47-66 (LLVLVGTLALVTSVISVNYQ) traverse the membrane as a helical segment.

The protein resides in the membrane. This is an uncharacterized protein from Saccharomyces cerevisiae (strain ATCC 204508 / S288c) (Baker's yeast).